Consider the following 215-residue polypeptide: Ras-related protein Rab-5A (215 aa).

S29, A30, G32, K33, S34, S35, H46, E47, T52, and G78 together coordinate GTP. S34 lines the Mg(2+) pocket. 2 short sequence motifs (switch) span residues 44–56 (QFHE…IGAA) and 77–93 (AGQE…YRGA). T52 contacts Mg(2+). Phosphoserine is present on S84. Residues N133, K134, D136, A164, and K165 each coordinate GTP. A disordered region spans residues 181–215 (LPKNEPQNPGANSARGRGVDLTEPAQPARSQCCSN). S-geranylgeranyl cysteine attachment occurs at residues C212 and C213.

This sequence belongs to the small GTPase superfamily. Rab family. Interacts with GDI1; this promotes dissociation from membranes; phosphorylation at Ser-84 disrupts this interaction. Interacts with GDI2; phosphorylation at Ser-84 disrupts the interaction. Interacts with EEA1. Interacts with RIN1 and GAPVD1, which regulate its pathway, probably by acting as a GEF. Interacts with ALS2CL, SUN2, ZFYVE20 and RUFY1. Interacts with RABEP1; one RABEP1 homodimer binds two RAB5A chains, but at opposite sides of the dimer. Interacts with SGSM1, SGSM3 and PIK3CB. Interacts with RINL. May be a component of a complex composed of RAB5A, DYN2 and PIK3C3. Does not interact with the BLOC-3 complex (heterodimer of HPS1 and HPS4). Interacts with CLN5. Interacts with APPL2. Interacts with F8A1/F8A2/F8A3. Found in a complex with F8A1/F8A2/F8A3, HTT and RAB5A; mediates the recruitment of HTT by RAB5A onto early endosomes. Interacts with ATP9A. Interacts with PPP1R21; mediates the recruitment of FERRY complex by RAB5A onto early endosomes. Mg(2+) is required as a cofactor. Phosphorylation of Ser-84 in the switch II region by LRRK2 prevents the association of RAB regulatory proteins, including RAB GDP dissociation inhibitors GDI1 and GDI2.

The protein localises to the cell membrane. The protein resides in the early endosome membrane. It is found in the melanosome. It localises to the cytoplasmic vesicle. Its subcellular location is the cell projection. The protein localises to the ruffle. The protein resides in the membrane. It is found in the cytoplasm. It localises to the cytosol. Its subcellular location is the phagosome membrane. The protein localises to the endosome membrane. The enzyme catalyses GTP + H2O = GDP + phosphate + H(+). With respect to regulation, regulated by guanine nucleotide exchange factors (GEFs) including RINL, which promote the exchange of bound GDP for free GTP. Regulated by GTPase activating proteins (GAPs) which increase the GTP hydrolysis activity. Inhibited by GDP dissociation inhibitors (GDIs). Functionally, the small GTPases Rab are key regulators of intracellular membrane trafficking, from the formation of transport vesicles to their fusion with membranes. Rabs cycle between an inactive GDP-bound form and an active GTP-bound form that is able to recruit to membranes different sets of downstream effectors directly responsible for vesicle formation, movement, tethering and fusion. RAB5A is required for the fusion of plasma membranes and early endosomes. Contributes to the regulation of filopodia extension. Required for the exosomal release of SDCBP, CD63, PDCD6IP and syndecan. Regulates maturation of apoptotic cell-containing phagosomes, probably downstream of DYN2 and PIK3C3. The polypeptide is Ras-related protein Rab-5A (Rattus norvegicus (Rat)).